The chain runs to 498 residues: Tyrosine 3-monooxygenase (498 aa).

Pro residues predominate over residues Met-1–Gln-10. Residues Met-1 to Ser-31 form a disordered region. Residue Ser-19 is modified to Phosphoserine; by CaMK2. Ser-31 is subject to Phosphoserine. The residue at position 40 (Ser-40) is a Phosphoserine; by CaMK2 and PKA. 3 residues coordinate Fe cation: His-331, His-336, and Glu-376. Residue Ser-472 is modified to Phosphoserine.

The protein belongs to the biopterin-dependent aromatic amino acid hydroxylase family. Homotetramer. Interacts (when phosphorylated at Ser-19) with YWHAG; one YWHAG dimer binds to one TH tetramer and this interaction may influence the phosphorylation and dephosphorylation of other sites. Interacts with NT5DC2; the interaction results in reduced phosphorylation and decreased catalytic activity of TH. Requires Fe(2+) as cofactor. In terms of processing, phosphorylated on Ser-19, Ser-31 and Ser-40 by several protein kinases with different site specificities. Phosphorylation at Ser-31 and Ser-40 leads to an increase of TH activity. Phosphorylation at Ser-40 activates the enzyme and also counteracts the feedback inhibition of TH by catecholamines. Phosphorylation of Ser-19 and Ser-31 triggers the proteasomal degradation of TH through the ubiquitin-proteasome pathway. Phosphorylation at Ser-31 facilitates transport of TH from the soma to the nerve terminals via the microtubule network. Phosphorylation at Ser-19 induces the high-affinity binding to the 14-3-3 protein YWHAG; this interaction may influence the phosphorylation and dephosphorylation of other sites. Ser-19 increases the phosphorylation at Ser-40 in a hierarchical manner, leading to increased activity.

The protein resides in the cytoplasm. Its subcellular location is the perinuclear region. The protein localises to the nucleus. It is found in the cell projection. It localises to the axon. The protein resides in the cytoplasmic vesicle. Its subcellular location is the secretory vesicle. The protein localises to the synaptic vesicle. It carries out the reaction (6R)-L-erythro-5,6,7,8-tetrahydrobiopterin + L-tyrosine + O2 = (4aS,6R)-4a-hydroxy-L-erythro-5,6,7,8-tetrahydrobiopterin + L-dopa. The protein operates within catecholamine biosynthesis; dopamine biosynthesis; dopamine from L-tyrosine: step 1/2. With respect to regulation, inhibited in feedback fashion by the catecholamine neurotransmitters, especially by dopamine in competition with tetrahydrobiopterin. Phosphorylation of several Ser/Thr residues in the N-terminus regulates the catalytic activity. Ser-31 and Ser-40 are readily phosphorylated to activate the catalytic activity. A cysteine modification induced by N-ethylmaleimide (NEM), inhibits tyrosine 3-monooxygenase activity through the modification of the Cys-177. Its function is as follows. Catalyzes the conversion of L-tyrosine to L-dihydroxyphenylalanine (L-Dopa), the rate-limiting step in the biosynthesis of catecholamines, dopamine, noradrenaline, and adrenaline. Uses tetrahydrobiopterin and molecular oxygen to convert tyrosine to L-Dopa. In addition to tyrosine, is able to catalyze the hydroxylation of phenylalanine and tryptophan but with lower specificity. Positively regulates the regression of retinal hyaloid vessels during postnatal development. In Rattus norvegicus (Rat), this protein is Tyrosine 3-monooxygenase (Th).